The primary structure comprises 846 residues: Rho GTPase-activating protein 12 (846 aa).

The SH3 domain occupies 12-74 (PGQVYIEVEY…PAQYVKEVTR (63 aa)). Polar residues predominate over residues 152–175 (LTHNNGKFNNDSHSPKVSSQNRTR). The tract at residues 152 to 241 (LTHNNGKFNN…PPNQGRPDSP (90 aa)) is disordered. Phosphoserine occurs at positions 165 and 176. Over residues 191–200 (TSFSQEQSCD) the composition is skewed to polar residues. 3 positions are modified to phosphoserine: serine 201, serine 213, and serine 215. Positions 224–234 (TEQIRATTPPN) are enriched in polar residues. Residues threonine 230 and threonine 231 each carry the phosphothreonine modification. The residue at position 240 (serine 240) is a Phosphoserine. Tyrosine 243 carries the phosphotyrosine modification. 2 consecutive WW domains span residues 265 to 298 (IQINGEWETHKDSSGRCYYYNRGTQERTWKPPRW) and 358 to 391 (DYTNEKWLKHVDDQGRQYYYSADGSRSEWELPKY). Residues 293–316 (WKPPRWTRDASISKGDFQNPGDQE) are disordered. 2 disordered regions span residues 428 to 466 (DTNDKESPTASKPCFPENESSPSSPKHQDTASSPKDQEK) and 580 to 629 (ETDE…TKKN). Over residues 445–461 (NESSPSSPKHQDTASSP) the composition is skewed to polar residues. One can recognise a PH domain in the interval 463–575 (DQEKYGLLNV…WFKVLSSTIN (113 aa)). The span at 580 to 590 (ETDEGIEEEIP) shows a compositional bias: acidic residues. Serine 592 is subject to Phosphoserine. A compositionally biased stretch (basic and acidic residues) spans 594–609 (GIEKHDKEKEQKDPKK). The Rho-GAP domain maps to 656 to 844 (SNLANLCQRE…LILLELSSIF (189 aa)).

Its function is as follows. GTPase activator for the Rho-type GTPases by converting them to an inactive GDP-bound state. The chain is Rho GTPase-activating protein 12 (ARHGAP12) from Homo sapiens (Human).